The sequence spans 413 residues: Exodeoxyribonuclease 7 large subunit (413 aa).

This sequence belongs to the XseA family. Heterooligomer composed of large and small subunits.

The protein resides in the cytoplasm. It carries out the reaction Exonucleolytic cleavage in either 5'- to 3'- or 3'- to 5'-direction to yield nucleoside 5'-phosphates.. Bidirectionally degrades single-stranded DNA into large acid-insoluble oligonucleotides, which are then degraded further into small acid-soluble oligonucleotides. The chain is Exodeoxyribonuclease 7 large subunit from Corynebacterium efficiens (strain DSM 44549 / YS-314 / AJ 12310 / JCM 11189 / NBRC 100395).